A 365-amino-acid polypeptide reads, in one-letter code: C-X-C chemokine receptor type 3 (365 aa).

Topologically, residues 1–57 are extracellular; the sequence is MVPEMSERQVFQASELTYLLENCSSSYDYAENESDSCCASPPCPQDISLNFDRAFLP. Asparagine 22 carries N-linked (GlcNAc...) asparagine glycosylation. Residues tyrosine 27 and tyrosine 29 each carry the sulfotyrosine modification. Asparagine 32 is a glycosylation site (N-linked (GlcNAc...) asparagine). The chain crosses the membrane as a helical span at residues 58-78; sequence ALYGLLFLLGLLGNGAVAAVL. Over 79-88 the chain is Cytoplasmic; sequence CSQRAARTST. A helical membrane pass occupies residues 89–109; that stretch reads DTFLLHLAVADMLLVLTLPLW. The Extracellular portion of the chain corresponds to 110–126; sequence RVDTAVQWVFGSGLCKV. A disulfide bridge connects residues cysteine 124 and cysteine 203. A helical membrane pass occupies residues 127–147; the sequence is AGALFNINFYAGALLLACISF. At 148–169 the chain is on the cytoplasmic side; sequence DRYLSIVHATQPYRRGPPARVT. Residues 170–190 form a helical membrane-spanning segment; it reads LTCVVVWGLCLFFAIPDFIFL. Topologically, residues 191–223 are extracellular; sequence SANRDERLNAMHCRYNFPQVGRTALRGLQLVAG. The chain crosses the membrane as a helical span at residues 224 to 244; it reads FLLPLLVMAYCYARILAVLLV. The Cytoplasmic portion of the chain corresponds to 245–256; it reads SRGQRRQRRMRL. A helical membrane pass occupies residues 257–277; the sequence is VVVVVVAFALCWTPYHLVVLV. The Extracellular portion of the chain corresponds to 278-301; the sequence is DTLMDLGALDRNCGRESRVDVAKS. Residues 302 to 322 form a helical membrane-spanning segment; that stretch reads VTSGLGYMHCCLNPLLYAFVG. Residues 323 to 365 are Cytoplasmic-facing; that stretch reads VKFRERMWMLLLRLGCPDHRGHQRHPTLSRRESSWSETPSTPR. Residues 342–365 are disordered; it reads RGHQRHPTLSRRESSWSETPSTPR.

The protein belongs to the G-protein coupled receptor 1 family. In terms of assembly, homomer. Forms heteromers with ACKR4. Interacts with PF4/CXCL4. Sulfation on Tyr-27 and Tyr-29 is essential for CXCL10 binding. In terms of processing, N-glycosylated.

It localises to the cell membrane. Functionally, receptor for the C-X-C chemokine CXCL9, CXCL10 and CXCL11 and mediates the proliferation, survival and angiogenic activity of mesangial cells through a heterotrimeric G-protein signaling pathway. Probably promotes cell chemotaxis response. Binds to CCL21. Upon activation by PF4, induces activated T-lymphocytes migration mediated via downstream Ras/extracellular signal-regulated kinase (ERK) signaling. The protein is C-X-C chemokine receptor type 3 (CXCR3) of Canis lupus familiaris (Dog).